The chain runs to 305 residues: HPr kinase/phosphorylase (305 aa).

Active-site residues include His-136 and Lys-157. 151 to 158 (GESGIGKS) is a binding site for ATP. Ser-158 lines the Mg(2+) pocket. Residue Asp-175 is the Proton acceptor; for phosphorylation activity. Proton donor; for dephosphorylation activity of the active site. The interval 198–207 (LEVRGLGIID) is important for the catalytic mechanism of both phosphorylation and dephosphorylation. Glu-199 contributes to the Mg(2+) binding site. The active site involves Arg-240. The important for the catalytic mechanism of dephosphorylation stretch occupies residues 261–266 (PIRPGR).

It belongs to the HPrK/P family. In terms of assembly, homohexamer. The cofactor is Mg(2+).

The catalysed reaction is [HPr protein]-L-serine + ATP = [HPr protein]-O-phospho-L-serine + ADP + H(+). It catalyses the reaction [HPr protein]-O-phospho-L-serine + phosphate + H(+) = [HPr protein]-L-serine + diphosphate. Catalyzes the ATP- as well as the pyrophosphate-dependent phosphorylation of a specific serine residue in HPr, a phosphocarrier protein of the phosphoenolpyruvate-dependent sugar phosphotransferase system (PTS). HprK/P also catalyzes the pyrophosphate-producing, inorganic phosphate-dependent dephosphorylation (phosphorolysis) of seryl-phosphorylated HPr (P-Ser-HPr). The two antagonistic activities of HprK/P are regulated by several intracellular metabolites, which change their concentration in response to the absence or presence of rapidly metabolisable carbon sources (glucose, fructose, etc.) in the growth medium. Therefore, by controlling the phosphorylation state of HPr, HPrK/P is a sensor enzyme that plays a major role in the regulation of carbon metabolism and sugar transport: it mediates carbon catabolite repression (CCR), and regulates PTS-catalyzed carbohydrate uptake and inducer exclusion. This Clostridium tetani (strain Massachusetts / E88) protein is HPr kinase/phosphorylase.